The primary structure comprises 1021 residues: Disease resistance protein Pikm2-TS (1021 aa).

A structured coiled coil (CC) domain region spans residues M1 to V182. The NB-ARC domain occupies T186–K519. Residues P297–D317 are disordered. 3 LRR repeats span residues L612–Y634, M659–L682, and E683–L705. Residues R719–L751 form a disordered region. LRR repeat units follow at residues L785 to Q807, S817 to A841, P843 to I865, T866 to I888, K912 to S935, and M957 to N981.

This sequence belongs to the disease resistance NB-LRR family. As to expression, constitutively expressed.

In terms of biological role, disease resistance (R) protein. Resistance proteins guard the plant against pathogens that contain an appropriate avirulence protein via an indirect interaction with this avirulence protein. That triggers a defense system including the hypersensitive response, which restricts the pathogen growth. Contribution of Pikm-1 is required to recognize the effector avirulence protein AVR-Pik. The sequence is that of Disease resistance protein Pikm2-TS from Oryza sativa subsp. japonica (Rice).